The sequence spans 431 residues: Forkhead box protein P3 (431 aa).

The disordered stretch occupies residues 1–68 (MPNPRPGKPS…SSLNPMPPSQ (68 aa)). Residues 10–25 (SAPSLALGPSPGASPS) show a composition bias toward low complexity. At serine 19 the chain carries Phosphoserine; by CDK2. N6-acetyllysine is present on lysine 31. Residues 68 to 76 (QLQLPTLPL) carry the Nuclear export signal motif. The short motif at 92–96 (LQALL) is the LXXLL motif element. The essential for transcriptional repressor activity and for interaction with KAT5 and HDAC7 stretch occupies residues 106 to 190 (LSTVDAHART…STLSAVPQSS (85 aa)). The interaction with ZFP90 stretch occupies residues 106–198 (LSTVDAHART…SSYPLLANGV (93 aa)). The tract at residues 149–199 (LPPGINVASLEWVSREPALLCTFPNPSAPRKDSTLSAVPQSSYPLLANGVC) is interaction with IKZF4. The C2H2-type zinc-finger motif lies at 197 to 222 (GVCKWPGCEKVFEEPEDFLKHCQADH). The Nuclear export signal motif lies at 239 to 248 (VQSLEQQLVL). Positions 239–260 (VQSLEQQLVLEKEKLSAMQAHL) are leucine-zipper. Residues lysine 250 and lysine 252 each participate in a glycyl lysine isopeptide (Lys-Gly) (interchain with G-Cter in ubiquitin) cross-link. Residues lysine 263 and lysine 268 each carry the N6-acetyllysine; alternate modification. Glycyl lysine isopeptide (Lys-Gly) (interchain with G-Cter in ubiquitin); alternate cross-links involve residues lysine 263 and lysine 268. The interval 278–336 (GSCCIVAAGSQGPVVPAWSGPREAPDSLFAVRRHLWGSHGNSTFPEFLHNMDYFKFHNM) is interaction with RUNX1. The segment at residues 337-423 (RPPFTYATLI…RKKRSQRPSR (87 aa)) is a DNA-binding region (fork-head). Lysine 393 participates in a covalent cross-link: Glycyl lysine isopeptide (Lys-Gly) (interchain with G-Cter in ubiquitin). Positions 414–417 (RKKR) match the Nuclear localization signal motif. Position 418 is a phosphoserine (serine 418). A propeptide spanning residues 418 to 431 (SQRPSRCSNPTPGP) is cleaved from the precursor.

As to quaternary structure, homodimer. Dimerization is essential for its transcriptional regulator activity. Interacts with IKZF3. Isoform 1 (via LXXLL motif), but not isoform 2, interacts with isoform 4 of RORA (via AF-2 motif). Interacts with STUB1, HSPA8 and HSPA1A/B. Interacts with PPP1CA, PPP1CB and PPP1CG. Interacts with KAT5 and HDAC7. Interacts with HDAC9 in the absence of T-cell stimulation. Interacts with USP7. Interacts with isoform 2 of ZFP90 and can form a complex with TRIM28 in the presence of isoform 2 of ZFP90. Interacts with RUNX1. Interacts with RORC. Interacts with RELA and NFATC2. Interacts with RUNX2, RUNX3 and IKZF4. Polyubiquitinated, leading to its proteasomal degradation in regulatory T-cells (Treg) which is mediated by STUB1 in a HSPA1A/B-dependent manner. Deubiquitinated by USP7 and USP44; leading to increase in protein stability. In terms of processing, phosphorylation at Ser-418 regulates its transcriptional repressor activity and consequently, regulatory T-cells (Treg) suppressive function. Dephosphorylated at Ser-418 by protein phosphatase 1 (PP1) in Treg cells derived from patients with rheumatoid arthritis. Phosphorylation by CDK2 negatively regulates its transcriptional activity and protein stability. Post-translationally, acetylation on lysine residues stabilizes FOXP3 and promotes differentiation of T-cells into induced regulatory T-cells (iTregs) associated with suppressive functions. Acetylation is mediated by a coordinated action of KAT5 and EP300/p300 acetyltransferases: EP300/p300 is required to enhance KAT5 autoacetylation, promoting acetylation of FOXP3 by KAT5. Deacetylated by SIRT1. Undergoes proteolytic cleavage in activated regulatory T-cells (Treg), and can be cleaved at either the N- or C-terminal site, or at both sites.

It localises to the nucleus. The protein resides in the cytoplasm. Transcriptional regulator which is crucial for the development and inhibitory function of regulatory T-cells (Treg). Plays an essential role in maintaining homeostasis of the immune system by allowing the acquisition of full suppressive function and stability of the Treg lineage, and by directly modulating the expansion and function of conventional T-cells. Can act either as a transcriptional repressor or a transcriptional activator depending on its interactions with other transcription factors, histone acetylases and deacetylases. The suppressive activity of Treg involves the coordinate activation of many genes, including CTLA4 and TNFRSF18 by FOXP3 along with repression of genes encoding cytokines such as interleukin-2 (IL2) and interferon-gamma (IFNG). Inhibits cytokine production and T-cell effector function by repressing the activity of two key transcription factors, RELA and NFATC2. Mediates transcriptional repression of IL2 via its association with histone acetylase KAT5 and histone deacetylase HDAC7. Can activate the expression of TNFRSF18, IL2RA and CTLA4 and repress the expression of IL2 and IFNG via its association with transcription factor RUNX1. Inhibits the differentiation of IL17 producing helper T-cells (Th17) by antagonizing RORC function, leading to down-regulation of IL17 expression, favoring Treg development. Inhibits the transcriptional activator activity of RORA. Can repress the expression of IL2 and IFNG via its association with transcription factor IKZF4. This is Forkhead box protein P3 (FOXP3) from Homo sapiens (Human).